Here is a 70-residue protein sequence, read N- to C-terminus: Putative membrane protein insertion efficiency factor (70 aa).

Belongs to the UPF0161 family.

It is found in the cell inner membrane. Its function is as follows. Could be involved in insertion of integral membrane proteins into the membrane. The sequence is that of Putative membrane protein insertion efficiency factor from Sphingopyxis alaskensis (strain DSM 13593 / LMG 18877 / RB2256) (Sphingomonas alaskensis).